The primary structure comprises 159 residues: 2-C-methyl-D-erythritol 2,4-cyclodiphosphate synthase (159 aa).

A divalent metal cation contacts are provided by Asp11 and His13. Residues 11–13 and 37–38 each bind 4-CDP-2-C-methyl-D-erythritol 2-phosphate; these read DVH and HS. Position 45 (His45) interacts with a divalent metal cation. 4-CDP-2-C-methyl-D-erythritol 2-phosphate-binding positions include 59–61 and 64–68; these read DIG and FPDSD.

It belongs to the IspF family. As to quaternary structure, homotrimer. A divalent metal cation serves as cofactor.

It catalyses the reaction 4-CDP-2-C-methyl-D-erythritol 2-phosphate = 2-C-methyl-D-erythritol 2,4-cyclic diphosphate + CMP. Its pathway is isoprenoid biosynthesis; isopentenyl diphosphate biosynthesis via DXP pathway; isopentenyl diphosphate from 1-deoxy-D-xylulose 5-phosphate: step 4/6. Its function is as follows. Involved in the biosynthesis of isopentenyl diphosphate (IPP) and dimethylallyl diphosphate (DMAPP), two major building blocks of isoprenoid compounds. Catalyzes the conversion of 4-diphosphocytidyl-2-C-methyl-D-erythritol 2-phosphate (CDP-ME2P) to 2-C-methyl-D-erythritol 2,4-cyclodiphosphate (ME-CPP) with a corresponding release of cytidine 5-monophosphate (CMP). The chain is 2-C-methyl-D-erythritol 2,4-cyclodiphosphate synthase from Solibacter usitatus (strain Ellin6076).